A 283-amino-acid chain; its full sequence is Thymidylate synthase (283 aa).

Residue Arg-22 coordinates dUMP. Cys-160 functions as the Nucleophile in the catalytic mechanism. Residues 180–183 (RSAD), Asn-191, and 221–223 (HIY) contribute to the dUMP site. (6R)-5,10-methylene-5,6,7,8-tetrahydrofolate is bound at residue Asp-183. Ser-282 is a (6R)-5,10-methylene-5,6,7,8-tetrahydrofolate binding site.

It belongs to the thymidylate synthase family. Bacterial-type ThyA subfamily. In terms of assembly, homodimer.

The protein resides in the cytoplasm. The catalysed reaction is dUMP + (6R)-5,10-methylene-5,6,7,8-tetrahydrofolate = 7,8-dihydrofolate + dTMP. Its pathway is pyrimidine metabolism; dTTP biosynthesis. Its function is as follows. Catalyzes the reductive methylation of 2'-deoxyuridine-5'-monophosphate (dUMP) to 2'-deoxythymidine-5'-monophosphate (dTMP) while utilizing 5,10-methylenetetrahydrofolate (mTHF) as the methyl donor and reductant in the reaction, yielding dihydrofolate (DHF) as a by-product. This enzymatic reaction provides an intracellular de novo source of dTMP, an essential precursor for DNA biosynthesis. The polypeptide is Thymidylate synthase (Glaesserella parasuis serovar 5 (strain SH0165) (Haemophilus parasuis)).